The chain runs to 486 residues: Protein nucleotidyltransferase YdiU (486 aa).

8 residues coordinate ATP: G90, G92, R93, K113, D125, G126, R176, and R183. D252 serves as the catalytic Proton acceptor. Mg(2+)-binding residues include N253 and D262. Position 262 (D262) interacts with ATP.

It belongs to the SELO family. It depends on Mg(2+) as a cofactor. The cofactor is Mn(2+).

It catalyses the reaction L-seryl-[protein] + ATP = 3-O-(5'-adenylyl)-L-seryl-[protein] + diphosphate. It carries out the reaction L-threonyl-[protein] + ATP = 3-O-(5'-adenylyl)-L-threonyl-[protein] + diphosphate. The catalysed reaction is L-tyrosyl-[protein] + ATP = O-(5'-adenylyl)-L-tyrosyl-[protein] + diphosphate. The enzyme catalyses L-histidyl-[protein] + UTP = N(tele)-(5'-uridylyl)-L-histidyl-[protein] + diphosphate. It catalyses the reaction L-seryl-[protein] + UTP = O-(5'-uridylyl)-L-seryl-[protein] + diphosphate. It carries out the reaction L-tyrosyl-[protein] + UTP = O-(5'-uridylyl)-L-tyrosyl-[protein] + diphosphate. Its function is as follows. Nucleotidyltransferase involved in the post-translational modification of proteins. It can catalyze the addition of adenosine monophosphate (AMP) or uridine monophosphate (UMP) to a protein, resulting in modifications known as AMPylation and UMPylation. The chain is Protein nucleotidyltransferase YdiU from Pseudomonas putida (strain ATCC 700007 / DSM 6899 / JCM 31910 / BCRC 17059 / LMG 24140 / F1).